Reading from the N-terminus, the 1291-residue chain is Capping protein-inhibiting regulator of actin dynamics (1291 aa).

Serine 7 and serine 28 each carry phosphoserine. 6 disordered regions span residues 48–71 (KFGQ…SSEE), 84–137 (QQDI…AGTI), 159–221 (HKLA…HEEK), 234–253 (KCKR…EQRR), 267–663 (QELL…ASHA), and 701–1238 (LGLS…TSVT). Serine 132 carries the post-translational modification Phosphoserine. Residues 159-176 (HKLAVKPKNQRVSRKHRW) show a composition bias toward basic residues. Polar residues predominate over residues 184–199 (EPGSFESQSSLDQNGQ). Over residues 201-221 (GEDKHIWHGEEPEPLESHEEK) the composition is skewed to basic and acidic residues. Positions 270 to 291 (LEEEEEGEEEEEVKEEGEEGEE) are enriched in acidic residues. 3 stretches are compositionally biased toward basic and acidic residues: residues 302–318 (PPEE…RCTE), 326–461 (DPAR…EDAK), and 470–483 (EAKR…KETP). The interval 324-560 (ADDPARLEAE…DLDAHCGGVD (237 aa)) is required for interaction with actin-capping proteins. Threonine 482 carries the phosphothreonine modification. Residues serine 493 and serine 510 each carry the phosphoserine modification. 2 stretches are compositionally biased toward basic and acidic residues: residues 506–527 (ADQR…REDL) and 534–543 (EIAEEPRGEG). The span at 580–593 (EGTPAPEENEATAA) shows a compositional bias: low complexity. Basic and acidic residues predominate over residues 594–612 (DIDRKVEELRWQEVDERQT). Serine 636 bears the Phosphoserine mark. Threonine 639 bears the Phosphothreonine mark. Positions 749-778 (KNSEGDQRGDREPARAGDEPVPRARCDSRG) are enriched in basic and acidic residues. The residue at position 867 (serine 867) is a Phosphoserine. The segment covering 875 to 888 (TESTTTLDSETTSD) has biased composition (low complexity). The span at 969–983 (QERKPALSPRKDSAE) shows a compositional bias: basic and acidic residues. Threonine 1033 bears the Phosphothreonine mark. At serine 1037 the chain carries Phosphoserine. Residues 1056–1070 (GKLDSEPSETAKESS) are compositionally biased toward basic and acidic residues. Serine 1076 bears the Phosphoserine mark. Composition is skewed to basic and acidic residues over residues 1081–1098 (EELK…EKKP), 1117–1141 (TGRK…EKVE), and 1157–1182 (GFRE…KLSK). Polar residues-rich tracts occupy residues 1183 to 1197 (ETVS…SRAS) and 1229 to 1238 (KSNTLPTSVT).

In terms of assembly, directly interacts with actin-capping proteins CAPZA1, CAPZA2 and CAPZB; this interaction decreases the binding of capping proteins to actin. In terms of tissue distribution, expressed in the small intestine (at protein level).

Its subcellular location is the cytoplasm. It is found in the cytosol. Involved in epithelial cell integrity by acting on the dynamics of the actin cytoskeleton. Positively regulates the actin polymerization, by inhibiting the interaction of actin-capping proteins with actin. The polypeptide is Capping protein-inhibiting regulator of actin dynamics (Mus musculus (Mouse)).